The sequence spans 494 residues: UPF0371 protein spyM18_1356 (494 aa).

It belongs to the UPF0371 family.

The sequence is that of UPF0371 protein spyM18_1356 from Streptococcus pyogenes serotype M18 (strain MGAS8232).